Here is a 267-residue protein sequence, read N- to C-terminus: 4-hydroxy-tetrahydrodipicolinate reductase (267 aa).

NAD(+) contacts are provided by residues 8-13 and Asp34; that span reads GAAGRM. Residue Arg35 coordinates NADP(+). NAD(+) is bound by residues 98–100 and 122–125; these read GTT and AANF. His155 (proton donor/acceptor) is an active-site residue. Residue His156 participates in (S)-2,3,4,5-tetrahydrodipicolinate binding. Lys159 functions as the Proton donor in the catalytic mechanism. A (S)-2,3,4,5-tetrahydrodipicolinate-binding site is contributed by 165–166; the sequence is GT.

It belongs to the DapB family.

The protein localises to the cytoplasm. It catalyses the reaction (S)-2,3,4,5-tetrahydrodipicolinate + NAD(+) + H2O = (2S,4S)-4-hydroxy-2,3,4,5-tetrahydrodipicolinate + NADH + H(+). The catalysed reaction is (S)-2,3,4,5-tetrahydrodipicolinate + NADP(+) + H2O = (2S,4S)-4-hydroxy-2,3,4,5-tetrahydrodipicolinate + NADPH + H(+). The protein operates within amino-acid biosynthesis; L-lysine biosynthesis via DAP pathway; (S)-tetrahydrodipicolinate from L-aspartate: step 4/4. In terms of biological role, catalyzes the conversion of 4-hydroxy-tetrahydrodipicolinate (HTPA) to tetrahydrodipicolinate. The polypeptide is 4-hydroxy-tetrahydrodipicolinate reductase (Pseudomonas entomophila (strain L48)).